A 499-amino-acid chain; its full sequence is GTPase Der (499 aa).

2 EngA-type G domains span residues Pro3–Leu166 and Ile213–Thr386. Residues Gly9–Ser16, Asp56–Ile60, Asn118–Asp121, Gly219–Ser226, Asp266–Val270, and Asn331–Asp334 contribute to the GTP site. One can recognise a KH-like domain in the interval Arg387–Ala471.

Belongs to the TRAFAC class TrmE-Era-EngA-EngB-Septin-like GTPase superfamily. EngA (Der) GTPase family. Associates with the 50S ribosomal subunit.

GTPase that plays an essential role in the late steps of ribosome biogenesis. This chain is GTPase Der, found in Aeromonas hydrophila subsp. hydrophila (strain ATCC 7966 / DSM 30187 / BCRC 13018 / CCUG 14551 / JCM 1027 / KCTC 2358 / NCIMB 9240 / NCTC 8049).